The following is a 790-amino-acid chain: Vacuolar protein sorting-associated protein 35C (790 aa).

M1 is modified (N-acetylmethionine).

This sequence belongs to the VPS35 family. Component of the retromer complex which consists of VPS29 (MAG1), VPS26 (VPS26A or VPS26B), VPS35 (VPS35A or VPS35B or VPS35C), VPS5/17 (SNX1 or SNX2A or SNX2B). Component of a retromer subcomplex consisting of VPS29 (MAG1), VPS26 (VPS26A or VPS26B), VPS35 (VPS35A or VPS35B or VPS35C).

It is found in the cytoplasm. It localises to the endosome membrane. Its subcellular location is the prevacuolar compartment membrane. The protein localises to the golgi apparatus. The protein resides in the trans-Golgi network membrane. Functionally, plays a role in vesicular protein sorting. Component of the membrane-associated retromer complex which is essential in endosome-to-Golgi retrograde transport. Also involved in the efficient sorting of seed storage proteins. The VPS29-VPS26-VPS35 subcomplex may be involved in recycling of specific cargos from endosome to the plasma membrane. This is Vacuolar protein sorting-associated protein 35C (VPS35C) from Arabidopsis thaliana (Mouse-ear cress).